Consider the following 255-residue polypeptide: SKA complex subunit 1 (255 aa).

A2 is subject to N-acetylalanine. A coiled-coil region spans residues 49 to 91; it reads INELLNKLELEIQYQEQTNNSLKELCESLEEDYKDIEHLKENV. The interval 92-132 is flexiple loop that anchors MAPRE1; that stretch reads PSHLPQVTVTQSCVKGSDLDPEEPIKVEEPEPVKKPPKEQR. The SXLP motif; mediates interaction with MAPRE1, targeting to microtubule plus ends, stabilization on kinetochores and is required for proper chromosome alignment to the metaphase plate motif lies at 93–96; sequence SHLP. A disordered region spans residues 106–131; sequence KGSDLDPEEPIKVEEPEPVKKPPKEQ. Residues 114–131 are compositionally biased toward basic and acidic residues; sequence EPIKVEEPEPVKKPPKEQ. The tract at residues 132–255 is binds microtubules and protein phosphatase PP1 subunit PPP1CA; the sequence is RSIKEMPFIT…GGGLTRYVIT (124 aa). At T157 the chain carries Phosphothreonine; by AURKB. A Phosphoserine; by AURKB modification is found at S242.

It belongs to the SKA1 family. In terms of assembly, component of the SKA complex, composed of SKA1, SKA2 and SKA3. The SKA complex is a homodimer organized around a central W-shaped coiled-coil structure, formed by the interacting domains of SKA1, SKA2, and SKA3, each end of the 'W' is extended further by the C-terminal microtubule-binding domains of SKA1 and SKA3; the complex forms extended structures on microtubules. Interacts (via SXLP motif) with MAPRE1 (via C-terminus); the interaction is direct and stabilizes the kinetochore-microtubule attachment of the SKA1 complex. Interacts (via C-terminus) with protein phosphatase PP1 subunit PPP1CA; the interaction is direct and required for recruitment of PPP1CA to the kinetochore. Interacts with the NDC80 complex; the interaction is required to establish kinetochore-microtubule end-on attachments. Post-translationally, phosphorylated by AURKB at Thr-157 and Ser-242 which negatively regulates the association of the SKA complex with kinetochores to allow correction of aberrant kinetochore-microtubule interactions and promote mitotic sister chromatid biorientation.

It localises to the cytoplasm. The protein localises to the cytoskeleton. Its subcellular location is the spindle. It is found in the chromosome. The protein resides in the centromere. It localises to the kinetochore. The protein localises to the microtubule organizing center. Its subcellular location is the centrosome. Component of the SKA complex, a microtubule plus end-binding complex of the outer kinetochore that stabilizes spindle microtubule-kinetochore attachments, promotes alignment of chromosomes at the mitotic spindle equator (chromosome congression) and assists suppression of the spindle assembly checkpoint. Kinetochores, consisting of a centromere-associated inner segment and a microtubule-contacting outer segment, play a crucial role in chromosome segregation by mediating the physical connection between centromeric DNA and spindle microtubules. The outer kinetochore is made up of the ten-subunit KMN network complex, comprising the MIS12, NDC80 and KNL1 complexes, and auxiliary microtubule-associated components such as the SKA complex; together they connect the outer kinetochore with the inner kinetochore, bind microtubules, and mediate interactions with mitotic checkpoint proteins that delay anaphase until chromosomes are bioriented on the spindle. The SKA complex is loaded onto bioriented kinetochores and it facilitates chromosome congression by stabilizing microtubules together with MAPRE1, and end-on attachment of the NDC80 complex to depolymerizing spindle microtubules, thereby assisting the poleward-moving kinetochore in withstanding microtubule pulling forces. The complex associates with dynamic microtubule plus-ends and can track both depolymerizing and elongating microtubules. The complex recruits protein phosphatase 1 (PP1) to the kinetochore in prometaphase and metaphase, to oppose spindle assembly checkpoint signaling and promote the onset of anaphase. In the complex, it mediates interactions with microtubules. It also stimulates AURKB/Aurora B catalytic activity. During meiosis the SKA complex stabilizes the meiotic spindle and is required for its migration to the cortex. In Homo sapiens (Human), this protein is SKA complex subunit 1 (SKA1).